A 453-amino-acid chain; its full sequence is Tetrahydroanabasine acetyltransferase (453 aa).

Active-site proton acceptor residues include histidine 163 and aspartate 388.

Belongs to the plant acyltransferase family. In terms of assembly, monomer.

It carries out the reaction tetrahydroanabasine + acetyl-CoA = ammodendrine + CoA. The protein operates within alkaloid biosynthesis. Its function is as follows. Tetrahydroanabasine acetyltransferase involved in the accumulation of quinolizidine type antinutritional alkaloids (QAs). QAs impart a bitter taste to plants, acting as repellents and toxicants for herbivores and predators, and possess a variety of pharmacological effects, including sedative, anticonvulsant, anti-inflammatory, antiviral, antitumor, antipyretic, anti-hepatitis B, antifibrotic, antiallergic, antidiarrheal, analgesic and antimicrobial activities. Mediates the conversion of tetrahydroanabasine into ammodendrine. The protein is Tetrahydroanabasine acetyltransferase of Lupinus angustifolius (Narrow-leaved blue lupine).